A 482-amino-acid chain; its full sequence is Nucleoside triphosphate pyrophosphatase/Nudix hydrolase fusion protein (482 aa).

Residues 1–299 (MSIPLILASK…DLWNVGRGEL (299 aa)) are maf-like. Aspartate 167 acts as the Proton acceptor in catalysis. In terms of domain architecture, Nudix hydrolase spans 338 to 475 (GTNGASGILL…TDWPRFAARL (138 aa)).

It in the N-terminal section; belongs to the Maf family. It depends on a divalent metal cation as a cofactor.

Its subcellular location is the cytoplasm. It catalyses the reaction a ribonucleoside 5'-triphosphate + H2O = a ribonucleoside 5'-phosphate + diphosphate + H(+). The enzyme catalyses a 2'-deoxyribonucleoside 5'-triphosphate + H2O = a 2'-deoxyribonucleoside 5'-phosphate + diphosphate + H(+). In terms of biological role, nucleoside triphosphate pyrophosphatase. May have a dual role in cell division arrest and in preventing the incorporation of modified nucleotides into cellular nucleic acids. This Bifidobacterium longum (strain NCC 2705) protein is Nucleoside triphosphate pyrophosphatase/Nudix hydrolase fusion protein.